Here is a 125-residue protein sequence, read N- to C-terminus: Small ribosomal subunit protein uS12 (125 aa).

Asp89 is subject to 3-methylthioaspartic acid.

Belongs to the universal ribosomal protein uS12 family. In terms of assembly, part of the 30S ribosomal subunit. Contacts proteins S8 and S17. May interact with IF1 in the 30S initiation complex.

In terms of biological role, with S4 and S5 plays an important role in translational accuracy. Functionally, interacts with and stabilizes bases of the 16S rRNA that are involved in tRNA selection in the A site and with the mRNA backbone. Located at the interface of the 30S and 50S subunits, it traverses the body of the 30S subunit contacting proteins on the other side and probably holding the rRNA structure together. The combined cluster of proteins S8, S12 and S17 appears to hold together the shoulder and platform of the 30S subunit. The protein is Small ribosomal subunit protein uS12 of Cupriavidus pinatubonensis (strain JMP 134 / LMG 1197) (Cupriavidus necator (strain JMP 134)).